The following is a 120-amino-acid chain: Large ribosomal subunit protein bL20 (120 aa).

This sequence belongs to the bacterial ribosomal protein bL20 family.

Binds directly to 23S ribosomal RNA and is necessary for the in vitro assembly process of the 50S ribosomal subunit. It is not involved in the protein synthesizing functions of that subunit. In Blochmanniella pennsylvanica (strain BPEN), this protein is Large ribosomal subunit protein bL20.